The chain runs to 353 residues: Lipase ZK262.3 (353 aa).

Residues 1-22 (MPKNLRFSVFLLFLLCINSVFG) form the signal peptide. 2 N-linked (GlcNAc...) asparagine glycosylation sites follow: N32 and N64. S163 (nucleophile) is an active-site residue. D221 (charge relay system) is an active-site residue. N-linked (GlcNAc...) asparagine glycosylation occurs at N267. A disulfide bridge links C277 with C288. H306 serves as the catalytic Charge relay system.

The protein belongs to the AB hydrolase superfamily. Lipase family.

It is found in the secreted. Functionally, probable lipase. This Caenorhabditis elegans protein is Lipase ZK262.3.